A 212-amino-acid polypeptide reads, in one-letter code: Imidazole glycerol phosphate synthase subunit HisH (212 aa).

The 212-residue stretch at Met-1 to Ala-212 folds into the Glutamine amidotransferase type-1 domain. The Nucleophile role is filled by Cys-79. Active-site residues include His-187 and Glu-189.

As to quaternary structure, heterodimer of HisH and HisF.

The protein localises to the cytoplasm. It carries out the reaction 5-[(5-phospho-1-deoxy-D-ribulos-1-ylimino)methylamino]-1-(5-phospho-beta-D-ribosyl)imidazole-4-carboxamide + L-glutamine = D-erythro-1-(imidazol-4-yl)glycerol 3-phosphate + 5-amino-1-(5-phospho-beta-D-ribosyl)imidazole-4-carboxamide + L-glutamate + H(+). The catalysed reaction is L-glutamine + H2O = L-glutamate + NH4(+). The protein operates within amino-acid biosynthesis; L-histidine biosynthesis; L-histidine from 5-phospho-alpha-D-ribose 1-diphosphate: step 5/9. IGPS catalyzes the conversion of PRFAR and glutamine to IGP, AICAR and glutamate. The HisH subunit catalyzes the hydrolysis of glutamine to glutamate and ammonia as part of the synthesis of IGP and AICAR. The resulting ammonia molecule is channeled to the active site of HisF. In Maridesulfovibrio salexigens (strain ATCC 14822 / DSM 2638 / NCIMB 8403 / VKM B-1763) (Desulfovibrio salexigens), this protein is Imidazole glycerol phosphate synthase subunit HisH.